The following is a 122-amino-acid chain: Large ribosomal subunit protein bL20c (122 aa).

It belongs to the bacterial ribosomal protein bL20 family.

The protein localises to the plastid. The protein resides in the chloroplast. In terms of biological role, binds directly to 23S ribosomal RNA and is necessary for the in vitro assembly process of the 50S ribosomal subunit. It is not involved in the protein synthesizing functions of that subunit. This chain is Large ribosomal subunit protein bL20c, found in Dioscorea elephantipes (Elephant's foot yam).